The chain runs to 205 residues: Thiamine-phosphate synthase (205 aa).

4-amino-2-methyl-5-(diphosphooxymethyl)pyrimidine-binding positions include 37 to 41 (QVREK) and asparagine 69. Residues aspartate 70 and aspartate 89 each coordinate Mg(2+). Serine 108 serves as a coordination point for 4-amino-2-methyl-5-(diphosphooxymethyl)pyrimidine. 134–136 (TGS) contacts 2-[(2R,5Z)-2-carboxy-4-methylthiazol-5(2H)-ylidene]ethyl phosphate. Lysine 137 is a 4-amino-2-methyl-5-(diphosphooxymethyl)pyrimidine binding site. 2-[(2R,5Z)-2-carboxy-4-methylthiazol-5(2H)-ylidene]ethyl phosphate contacts are provided by residues glycine 165 and 185–186 (IS).

This sequence belongs to the thiamine-phosphate synthase family. Mg(2+) serves as cofactor.

It catalyses the reaction 2-[(2R,5Z)-2-carboxy-4-methylthiazol-5(2H)-ylidene]ethyl phosphate + 4-amino-2-methyl-5-(diphosphooxymethyl)pyrimidine + 2 H(+) = thiamine phosphate + CO2 + diphosphate. The enzyme catalyses 2-(2-carboxy-4-methylthiazol-5-yl)ethyl phosphate + 4-amino-2-methyl-5-(diphosphooxymethyl)pyrimidine + 2 H(+) = thiamine phosphate + CO2 + diphosphate. The catalysed reaction is 4-methyl-5-(2-phosphooxyethyl)-thiazole + 4-amino-2-methyl-5-(diphosphooxymethyl)pyrimidine + H(+) = thiamine phosphate + diphosphate. The protein operates within cofactor biosynthesis; thiamine diphosphate biosynthesis; thiamine phosphate from 4-amino-2-methyl-5-diphosphomethylpyrimidine and 4-methyl-5-(2-phosphoethyl)-thiazole: step 1/1. Its function is as follows. Condenses 4-methyl-5-(beta-hydroxyethyl)thiazole monophosphate (THZ-P) and 2-methyl-4-amino-5-hydroxymethyl pyrimidine pyrophosphate (HMP-PP) to form thiamine monophosphate (TMP). This chain is Thiamine-phosphate synthase, found in Clostridium botulinum (strain ATCC 19397 / Type A).